A 780-amino-acid polypeptide reads, in one-letter code: Phosphoenolpyruvate synthase (780 aa).

The active-site Tele-phosphohistidine intermediate is His-409. 7 residues coordinate substrate: Arg-499, Arg-566, Glu-668, Gly-689, Ser-690, Asn-691, and Asp-692. Glu-668 provides a ligand contact to Mg(2+). Residue Asp-692 coordinates Mg(2+).

It belongs to the PEP-utilizing enzyme family. The cofactor is Mg(2+).

It carries out the reaction pyruvate + ATP + H2O = phosphoenolpyruvate + AMP + phosphate + 2 H(+). The protein operates within carbohydrate biosynthesis; gluconeogenesis. In terms of biological role, catalyzes the phosphorylation of pyruvate to phosphoenolpyruvate. The protein is Phosphoenolpyruvate synthase (ppsA) of Deinococcus radiodurans (strain ATCC 13939 / DSM 20539 / JCM 16871 / CCUG 27074 / LMG 4051 / NBRC 15346 / NCIMB 9279 / VKM B-1422 / R1).